Consider the following 218-residue polypeptide: Trimethylamine corrinoid protein 2 (218 aa).

One can recognise a B12-binding N-terminal domain in the interval 1–92 (MAGKEEIIAK…EMEKRKSQTK (92 aa)). The region spanning 94–218 (LGTVIIGTIE…AKVKAALKVG (125 aa)) is the B12-binding domain. Residue H107 coordinates methylcob(III)alamin.

The protein belongs to the methylamine corrinoid protein family. As to quaternary structure, can form a complex with MttB.

It functions in the pathway one-carbon metabolism; methanogenesis from trimethylamine. Acts probably as a methyl group carrier between MttB and either MtbA or MtaA. The chain is Trimethylamine corrinoid protein 2 (mttC2) from Methanosarcina mazei (strain ATCC BAA-159 / DSM 3647 / Goe1 / Go1 / JCM 11833 / OCM 88) (Methanosarcina frisia).